The chain runs to 159 residues: Nucleotide-binding protein PSPA7_4966 (159 aa).

It belongs to the YajQ family.

Nucleotide-binding protein. This is Nucleotide-binding protein PSPA7_4966 from Pseudomonas paraeruginosa (strain DSM 24068 / PA7) (Pseudomonas aeruginosa (strain PA7)).